Here is a 740-residue protein sequence, read N- to C-terminus: Eukaryotic translation initiation factor 3 subunit B (740 aa).

Polar residues predominate over residues 1–10 (MAPSFDTLSE). A disordered region spans residues 1 to 20 (MAPSFDTLSEQDLHEEEEEE). An RRM domain is found at 40–126 (TFVVIDGLPV…HTLLVNKLMD (87 aa)). WD repeat units lie at residues 193-230 (AHWT…KQKQ), 232-289 (PHPF…RSFV), 302-343 (EPKK…LLGK), 455-496 (SLKD…SFFA), 513-556 (IEKK…EKPE), and 571-609 (TEHY…HTFA). The disordered stretch occupies residues 696–721 (AYGLPEEADDPKLAKDAAATTQEQGE).

Belongs to the eIF-3 subunit B family. As to quaternary structure, component of the eukaryotic translation initiation factor 3 (eIF-3) complex.

It localises to the cytoplasm. RNA-binding component of the eukaryotic translation initiation factor 3 (eIF-3) complex, which is involved in protein synthesis of a specialized repertoire of mRNAs and, together with other initiation factors, stimulates binding of mRNA and methionyl-tRNAi to the 40S ribosome. The eIF-3 complex specifically targets and initiates translation of a subset of mRNAs involved in cell proliferation. This is Eukaryotic translation initiation factor 3 subunit B (prt1) from Aspergillus fumigatus (strain ATCC MYA-4609 / CBS 101355 / FGSC A1100 / Af293) (Neosartorya fumigata).